A 499-amino-acid chain; its full sequence is 2-isopropylmalate synthase (499 aa).

In terms of domain architecture, Pyruvate carboxyltransferase spans isoleucine 5–alanine 267. Mn(2+) is bound by residues aspartate 14, histidine 202, histidine 204, and asparagine 238. The interval serine 391–arginine 499 is regulatory domain.

The protein belongs to the alpha-IPM synthase/homocitrate synthase family. LeuA type 1 subfamily. Mn(2+) is required as a cofactor.

Its subcellular location is the cytoplasm. It catalyses the reaction 3-methyl-2-oxobutanoate + acetyl-CoA + H2O = (2S)-2-isopropylmalate + CoA + H(+). Its pathway is amino-acid biosynthesis; L-leucine biosynthesis; L-leucine from 3-methyl-2-oxobutanoate: step 1/4. In terms of biological role, catalyzes the condensation of the acetyl group of acetyl-CoA with 3-methyl-2-oxobutanoate (2-ketoisovalerate) to form 3-carboxy-3-hydroxy-4-methylpentanoate (2-isopropylmalate). The sequence is that of 2-isopropylmalate synthase from Pyrococcus furiosus (strain ATCC 43587 / DSM 3638 / JCM 8422 / Vc1).